A 383-amino-acid polypeptide reads, in one-letter code: 1-deoxy-D-xylulose 5-phosphate reductoisomerase (383 aa).

Residues T10, G11, S12, I13, G36, R37, N38, and N122 each coordinate NADPH. K123 serves as a coordination point for 1-deoxy-D-xylulose 5-phosphate. E124 is a binding site for NADPH. D148 contributes to the Mn(2+) binding site. 1-deoxy-D-xylulose 5-phosphate-binding residues include S149, E150, S174, and H197. E150 contacts Mn(2+). G203 contacts NADPH. S210, N215, K216, and E219 together coordinate 1-deoxy-D-xylulose 5-phosphate. E219 is a Mn(2+) binding site.

It belongs to the DXR family. Mg(2+) is required as a cofactor. It depends on Mn(2+) as a cofactor.

The catalysed reaction is 2-C-methyl-D-erythritol 4-phosphate + NADP(+) = 1-deoxy-D-xylulose 5-phosphate + NADPH + H(+). It participates in isoprenoid biosynthesis; isopentenyl diphosphate biosynthesis via DXP pathway; isopentenyl diphosphate from 1-deoxy-D-xylulose 5-phosphate: step 1/6. Catalyzes the NADPH-dependent rearrangement and reduction of 1-deoxy-D-xylulose-5-phosphate (DXP) to 2-C-methyl-D-erythritol 4-phosphate (MEP). This is 1-deoxy-D-xylulose 5-phosphate reductoisomerase from Bacillus pumilus (strain SAFR-032).